A 92-amino-acid polypeptide reads, in one-letter code: Small ribosomal subunit protein uS19c (92 aa).

Belongs to the universal ribosomal protein uS19 family. As to quaternary structure, component of the chloroplast small ribosomal subunit (SSU). Mature 70S chloroplast ribosomes of higher plants consist of a small (30S) and a large (50S) subunit. The 30S small subunit contains 1 molecule of ribosomal RNA (16S rRNA) and 24 different proteins. The 50S large subunit contains 3 rRNA molecules (23S, 5S and 4.5S rRNA) and 33 different proteins. uS19c binds directly to 16S ribosomal RNA.

The protein resides in the plastid. Its subcellular location is the chloroplast. Component of the chloroplast ribosome (chloro-ribosome), a dedicated translation machinery responsible for the synthesis of chloroplast genome-encoded proteins, including proteins of the transcription and translation machinery and components of the photosynthetic apparatus. The sequence is that of Small ribosomal subunit protein uS19c (rps19) from Spinacia oleracea (Spinach).